The chain runs to 535 residues: GMP synthase [glutamine-hydrolyzing] (535 aa).

The Glutamine amidotransferase type-1 domain occupies 4 to 210 (KILILDFGSQ…VHEICHCKPD (207 aa)). The active-site Nucleophile is the Cys85. Active-site residues include His184 and Glu186. The 193-residue stretch at 211–403 (WVMGDYIAEA…LGLPREMVYR (193 aa)) folds into the GMPS ATP-PPase domain. Residue 238–244 (SGGVDSS) coordinates ATP.

As to quaternary structure, homodimer.

The catalysed reaction is XMP + L-glutamine + ATP + H2O = GMP + L-glutamate + AMP + diphosphate + 2 H(+). Its pathway is purine metabolism; GMP biosynthesis; GMP from XMP (L-Gln route): step 1/1. In terms of biological role, catalyzes the synthesis of GMP from XMP. The protein is GMP synthase [glutamine-hydrolyzing] of Polynucleobacter asymbioticus (strain DSM 18221 / CIP 109841 / QLW-P1DMWA-1) (Polynucleobacter necessarius subsp. asymbioticus).